Here is an 807-residue protein sequence, read N- to C-terminus: Microbial collagenase (807 aa).

The N-terminal stretch at 1-27 (MSHLLPFPRRRLALACLLASISGASFG) is a signal peptide. A Zn(2+)-binding site is contributed by His-434. Glu-435 is an active-site residue. His-438 contributes to the Zn(2+) binding site. Positions 562–585 (EVTPENPDTDPDTPTEPSDGVTQL) are disordered.

The protein belongs to the peptidase M9A family. The cofactor is Zn(2+).

It localises to the secreted. It carries out the reaction Digestion of native collagen in the triple helical region at Xaa-|-Gly bonds. With synthetic peptides, a preference is shown for Gly at P3 and P1', Pro and Ala at P2 and P2', and hydroxyproline, Ala or Arg at P3'.. Its function is as follows. Possesses gelatinolytic activity. This chain is Microbial collagenase, found in Vibrio vulnificus (strain CMCP6).